The chain runs to 127 residues: Small ribosomal subunit protein uS13 (127 aa).

The interval 97–127 (PVRGQRTRTNARTRRGGRKTVAGKKKAAAKK) is disordered. The span at 101–127 (QRTRTNARTRRGGRKTVAGKKKAAAKK) shows a compositional bias: basic residues.

This sequence belongs to the universal ribosomal protein uS13 family. In terms of assembly, part of the 30S ribosomal subunit. Forms a loose heterodimer with protein S19. Forms two bridges to the 50S subunit in the 70S ribosome.

In terms of biological role, located at the top of the head of the 30S subunit, it contacts several helices of the 16S rRNA. In the 70S ribosome it contacts the 23S rRNA (bridge B1a) and protein L5 of the 50S subunit (bridge B1b), connecting the 2 subunits; these bridges are implicated in subunit movement. Contacts the tRNAs in the A and P-sites. The sequence is that of Small ribosomal subunit protein uS13 from Gloeobacter violaceus (strain ATCC 29082 / PCC 7421).